The sequence spans 311 residues: Pyrimidine-specific ribonucleoside hydrolase RihA (311 aa).

His240 is an active-site residue.

It belongs to the IUNH family. RihA subfamily.

Hydrolyzes with equal efficiency cytidine or uridine to ribose and cytosine or uracil, respectively. The protein is Pyrimidine-specific ribonucleoside hydrolase RihA of Escherichia coli O8 (strain IAI1).